Consider the following 452-residue polypeptide: Phosphoglucosamine mutase (452 aa).

The active-site Phosphoserine intermediate is the Ser-101. Residues Ser-101, Asp-241, Asp-243, and Asp-245 each contribute to the Mg(2+) site. Ser-101 bears the Phosphoserine mark.

Belongs to the phosphohexose mutase family. Requires Mg(2+) as cofactor. Activated by phosphorylation.

The enzyme catalyses alpha-D-glucosamine 1-phosphate = D-glucosamine 6-phosphate. Its function is as follows. Catalyzes the conversion of glucosamine-6-phosphate to glucosamine-1-phosphate. This is Phosphoglucosamine mutase from Lactococcus lactis subsp. cremoris (strain MG1363).